Consider the following 223-residue polypeptide: Ubiquitin carboxyl-terminal hydrolase isozyme L1 (223 aa).

At M1 the chain carries N-acetylmethionine. A UCH catalytic domain is found at Q2 to K221. Residues P5–P10 form an interaction with ubiquitin region. C90 acts as the Nucleophile in catalysis. Position 125 is a phosphoserine (S125). The Proton donor role is filled by H161. An interaction with ubiquitin region spans residues E211–A216. A lipid anchor (S-farnesyl cysteine) is attached at C220. Residues K221–A223 constitute a propeptide, removed in mature form.

The protein belongs to the peptidase C12 family. In terms of assembly, monomer. Homodimer. Interacts with SNCA. Interacts with COPS5. O-glycosylated. Found in neuronal cell bodies and processes throughout the neocortex (at protein level). Expressed in neurons and cells of the diffuse neuroendocrine system and their tumors. Weakly expressed in ovary. Down-regulated in brains from Parkinson disease and Alzheimer disease patients.

It is found in the cytoplasm. It localises to the endoplasmic reticulum membrane. It catalyses the reaction Thiol-dependent hydrolysis of ester, thioester, amide, peptide and isopeptide bonds formed by the C-terminal Gly of ubiquitin (a 76-residue protein attached to proteins as an intracellular targeting signal).. In terms of biological role, deubiquitinase that plays a role in the regulation of several processes such as maintenance of synaptic function, cardiac function, inflammatory response or osteoclastogenesis. Abrogates the ubiquitination of multiple proteins including WWTR1/TAZ, EGFR, HIF1A and beta-site amyloid precursor protein cleaving enzyme 1/BACE1. In addition, recognizes and hydrolyzes a peptide bond at the C-terminal glycine of ubiquitin to maintain a stable pool of monoubiquitin that is a key requirement for the ubiquitin-proteasome and the autophagy-lysosome pathways. Regulates amyloid precursor protein/APP processing by promoting BACE1 degradation resulting in decreased amyloid beta production. Plays a role in the immune response by regulating the ability of MHC I molecules to reach cross-presentation compartments competent for generating Ag-MHC I complexes. Mediates the 'Lys-48'-linked deubiquitination of the transcriptional coactivator WWTR1/TAZ leading to its stabilization and inhibition of osteoclastogenesis. Deubiquitinates and stabilizes epidermal growth factor receptor EGFR to prevent its degradation and to activate its downstream mediators. Modulates oxidative activity in skeletal muscle by regulating key mitochondrial oxidative proteins. Enhances the activity of hypoxia-inducible factor 1-alpha/HIF1A by abrogateing its VHL E3 ligase-mediated ubiquitination and consequently inhibiting its degradation. The sequence is that of Ubiquitin carboxyl-terminal hydrolase isozyme L1 (UCHL1) from Homo sapiens (Human).